A 231-amino-acid chain; its full sequence is Phosphoglycolate phosphatase (231 aa).

The active-site Nucleophile is D9. Residues D9 and D11 each coordinate Mg(2+). Substrate is bound at residue K154. Residues D177 and D181 each contribute to the Mg(2+) site.

Belongs to the archaeal SPP-like hydrolase family. The cofactor is Mg(2+).

It carries out the reaction 2-phosphoglycolate + H2O = glycolate + phosphate. Catalyzes the dephosphorylation of 2-phosphoglycolate. This is Phosphoglycolate phosphatase from Pyrococcus furiosus (strain ATCC 43587 / DSM 3638 / JCM 8422 / Vc1).